Consider the following 184-residue polypeptide: Cbp/p300-interacting transactivator 4 (184 aa).

The span at 18 to 28 (PSAAAAHGPHA) shows a compositional bias: low complexity. Disordered regions lie at residues 18-67 (PSAA…YGAF) and 94-128 (TPYP…PAHA). Residues 104–126 (PNAPGGPPGPQPAPSAAAPPPPA) are compositionally biased toward pro residues.

It belongs to the CITED family. As to quaternary structure, interacts via its C-terminal region with the CH1 domain of CREBBP and EP300. Interacts with all TFAP2/AP-2 isoforms. Expressed in most tissues examined with highest levels of expression in heart, liver, skeletal muscle and pancreas. Also expressed in bladder cell line ECV-304 and in various breast cancer cell lines. Also detected in both in situ and invasive breast tumors where its expression is down-regulated and mostly restricted to the cytoplasm of malignant epithelium. Down-regulation of expression is associated with elevated levels of HIF1A and increased tumor growth and angiogenesis.

It localises to the nucleus. Its subcellular location is the cytoplasm. Its function is as follows. Acts as a transcriptional coactivator for TFAP2/AP-2. Enhances estrogen-dependent transactivation mediated by estrogen receptors. May function as an inhibitor of transactivation by HIF1A by disrupting HIF1A interaction with CREBBP. May be involved in regulation of gene expression during development and differentiation of blood cells, endothelial cells and mammary epithelial cells. The protein is Cbp/p300-interacting transactivator 4 of Homo sapiens (Human).